Consider the following 72-residue polypeptide: UPF0270 protein YheU (72 aa).

Belongs to the UPF0270 family.

The chain is UPF0270 protein YheU from Salmonella arizonae (strain ATCC BAA-731 / CDC346-86 / RSK2980).